A 590-amino-acid chain; its full sequence is Aspartate--tRNA(Asp/Asn) ligase (590 aa).

E175 is an L-aspartate binding site. An aspartate region spans residues 199–202 (QQYK). R221 and H450 together coordinate L-aspartate. ATP is bound at residue 221–223 (RDE). E484 contributes to the ATP binding site. L-aspartate is bound at residue R491. Residue 536–539 (GVDR) coordinates ATP.

Belongs to the class-II aminoacyl-tRNA synthetase family. Type 1 subfamily. Homodimer.

The protein resides in the cytoplasm. The catalysed reaction is tRNA(Asx) + L-aspartate + ATP = L-aspartyl-tRNA(Asx) + AMP + diphosphate. Aspartyl-tRNA synthetase with relaxed tRNA specificity since it is able to aspartylate not only its cognate tRNA(Asp) but also tRNA(Asn). Reaction proceeds in two steps: L-aspartate is first activated by ATP to form Asp-AMP and then transferred to the acceptor end of tRNA(Asp/Asn). This Nitrobacter hamburgensis (strain DSM 10229 / NCIMB 13809 / X14) protein is Aspartate--tRNA(Asp/Asn) ligase.